Here is a 291-residue protein sequence, read N- to C-terminus: MKIKEGYMPFHEYKTYYRIVGEPSADKAPLLIHGGPGSSHNYFELMDDYAETGRQLIMYDQVGCGKSSLPEDPGVYVKETWAEELVALRKFLHLDELHMLGQSWGGMLEMYYLTSFDPQGIKSVMIDGSPASIKLWVQEQHRLIKYLSYEDRAAIAEAERTGDFTNVKYLAANDRYMEKYCWDDPDENSPEPLRRPTNGKRASLIAEGPNEFTENGTISDFDVTDQLHKIHVPVLVTSGTDDLCTPLIAKSVVDHIPGAKWHLFANSRHLALLDQHDEFIHVLDQWLAAND.

In terms of domain architecture, AB hydrolase-1 spans 30-274 (LLIHGGPGSS…ANSRHLALLD (245 aa)). Ser-103 acts as the Nucleophile in catalysis. The active site involves Asp-242. The active-site Proton donor is His-269.

This sequence belongs to the peptidase S33 family.

It is found in the cell envelope. The enzyme catalyses Release of N-terminal proline from a peptide.. Releases the N-terminal proline from various substrates. This Lacticaseibacillus rhamnosus (strain Lc 705) (Lactobacillus rhamnosus) protein is Proline iminopeptidase.